Here is a 130-residue protein sequence, read N- to C-terminus: uncharacterized protein (130 aa).

N102 carries N-linked (GlcNAc...) asparagine glycosylation. Residues 110-130 form a helical membrane-spanning segment; it reads DPLAFYLMFLIIITILLIMIL.

Its subcellular location is the membrane. This is an uncharacterized protein from Dictyostelium discoideum (Social amoeba).